The following is a 1233-amino-acid chain: Pesticidal crystal protein Cry1Bc (1233 aa).

The protein belongs to the delta endotoxin family.

Promotes colloidosmotic lysis by binding to the midgut epithelial cells of insects. This Bacillus thuringiensis subsp. morrisoni protein is Pesticidal crystal protein Cry1Bc (cry1Bc).